A 74-amino-acid polypeptide reads, in one-letter code: Protein sok (74 aa).

The interval 26-45 (TQHGNKPPSRHEAESLKRRA) is disordered.

This Escherichia coli protein is Protein sok (sok).